A 428-amino-acid chain; its full sequence is Serine--tRNA ligase (428 aa).

Position 231 to 233 (231 to 233) interacts with L-serine; the sequence is TAE. ATP-binding positions include 262–264 and V278; that span reads RRE. Residue E285 participates in L-serine binding. 349–352 contributes to the ATP binding site; sequence EVSS. Position 384 (S384) interacts with L-serine.

It belongs to the class-II aminoacyl-tRNA synthetase family. Type-1 seryl-tRNA synthetase subfamily. In terms of assembly, homodimer. The tRNA molecule binds across the dimer.

Its subcellular location is the cytoplasm. It catalyses the reaction tRNA(Ser) + L-serine + ATP = L-seryl-tRNA(Ser) + AMP + diphosphate + H(+). The enzyme catalyses tRNA(Sec) + L-serine + ATP = L-seryl-tRNA(Sec) + AMP + diphosphate + H(+). Its pathway is aminoacyl-tRNA biosynthesis; selenocysteinyl-tRNA(Sec) biosynthesis; L-seryl-tRNA(Sec) from L-serine and tRNA(Sec): step 1/1. Its function is as follows. Catalyzes the attachment of serine to tRNA(Ser). Is also able to aminoacylate tRNA(Sec) with serine, to form the misacylated tRNA L-seryl-tRNA(Sec), which will be further converted into selenocysteinyl-tRNA(Sec). This is Serine--tRNA ligase from Chlamydia muridarum (strain MoPn / Nigg).